Reading from the N-terminus, the 297-residue chain is Tumor necrosis factor receptor superfamily member 27 (297 aa).

The Extracellular portion of the chain corresponds to 1 to 138 (MDCQENEYRD…AHTVPPREAT (138 aa)). 3 TNFR-Cys repeats span residues 2–41 (DCQENEYRDQWGRCVTCQQCGPGQELSKDCGYGEGGDAHC), 43–83 (VCPP…NAIC), and 85–118 (DCLPRFYRKTRIGGLQDQECIPCTKQTPSSEVQC). 8 cysteine pairs are disulfide-bonded: Cys3–Cys15, Cys18–Cys31, Cys21–Cys41, Cys44–Cys58, Cys61–Cys75, Cys64–Cys83, Cys86–Cys104, and Cys107–Cys118. Asn74 and Asn77 each carry an N-linked (GlcNAc...) asparagine glycan. The chain crosses the membrane as a helical; Signal-anchor for type III membrane protein span at residues 139–159 (LVALVGSLLVVFALAFLGLFF). Residues 160 to 297 (LYCKQIFNRH…LYVPFEVPSL (138 aa)) lie on the Cytoplasmic side of the membrane.

In terms of assembly, associates with TRAF1, TRAF3 and TRAF6.

It is found in the membrane. Its function is as follows. Receptor for EDA isoform A2, but not for EDA isoform A1. Mediates the activation of the NF-kappa-B and JNK pathways. Activation seems to be mediated by binding to TRAF3 and TRAF6. This chain is Tumor necrosis factor receptor superfamily member 27 (Eda2r), found in Mus musculus (Mouse).